The chain runs to 47 residues: Delta-actitoxin-Cgg1b (47 aa).

Pro3 carries the post-translational modification Hydroxyproline. 3 disulfide bridges follow: Cys4–Cys44, Cys6–Cys34, and Cys27–Cys45.

The protein belongs to the sea anemone sodium channel inhibitory toxin family. Type I subfamily.

It is found in the secreted. It localises to the nematocyst. In terms of biological role, binds voltage-dependently at site 3 of sodium channels (Nav) and inhibits the inactivation, thereby blocking neuronal transmission. This chain is Delta-actitoxin-Cgg1b, found in Condylactis gigantea (Giant Caribbean anemone).